A 195-amino-acid chain; its full sequence is Glycerol-3-phosphate acyltransferase (195 aa).

5 helical membrane passes run 3–23 (EAAL…YFFT), 51–71 (GVAL…AWIG), 79–99 (LLVI…FLGF), 111–131 (IILF…LAIV), and 153–173 (LAMG…ALVV).

Belongs to the PlsY family. As to quaternary structure, probably interacts with PlsX.

It localises to the cell membrane. It catalyses the reaction an acyl phosphate + sn-glycerol 3-phosphate = a 1-acyl-sn-glycero-3-phosphate + phosphate. It participates in lipid metabolism; phospholipid metabolism. Catalyzes the transfer of an acyl group from acyl-phosphate (acyl-PO(4)) to glycerol-3-phosphate (G3P) to form lysophosphatidic acid (LPA). This enzyme utilizes acyl-phosphate as fatty acyl donor, but not acyl-CoA or acyl-ACP. The polypeptide is Glycerol-3-phosphate acyltransferase (Syntrophomonas wolfei subsp. wolfei (strain DSM 2245B / Goettingen)).